A 665-amino-acid chain; its full sequence is ATPase WRNIP1 (665 aa).

The UBZ4-type zinc finger occupies 17 to 44 (QVQCPVCQQMMPAAHINSHLDRCLLLHP). Zn(2+)-binding residues include Cys-20, Cys-23, His-31, His-35, and Cys-39. Residues 48–190 (AEPAAGSHRA…DGEDDPGHWD (143 aa)) form a disordered region. A phosphoserine mark is found at Ser-65 and Ser-75. Polar residues predominate over residues 76-89 (ESSALKQPATPTAA). A Glycyl lysine isopeptide (Lys-Gly) (interchain with G-Cter in ubiquitin) cross-link involves residue Lys-81. Thr-85 carries the phosphothreonine modification. Phosphoserine is present on residues Ser-91 and Ser-92. The span at 92-104 (SEGEGEEGDDGGE) shows a compositional bias: acidic residues. Residue Thr-116 is modified to Phosphothreonine. Residues 130-155 (RSSSPGRKGSGKRPAAAAAAGSASPR) show a composition bias toward low complexity. The residue at position 139 (Ser-139) is a Phosphoserine. A Glycyl lysine isopeptide (Lys-Gly) (interchain with G-Cter in ubiquitin) cross-link involves residue Lys-141. Residue Ser-153 is modified to Phosphoserine. Positions 159-184 (EAEAQEEEEAVGDGDGDGDADADGED) are enriched in acidic residues. Residue Lys-225 forms a Glycyl lysine isopeptide (Lys-Gly) (interchain with G-Cter in ubiquitin) linkage. 270–276 (PGCGKTT) is an ATP binding site. Glycyl lysine isopeptide (Lys-Gly) (interchain with G-Cter in ubiquitin) cross-links involve residues Lys-301, Lys-310, Lys-316, Lys-322, and Lys-335. Lys-482 is covalently cross-linked (Glycyl lysine isopeptide (Lys-Gly) (interchain with G-Cter in SUMO2); alternate). Lys-482 participates in a covalent cross-link: Glycyl lysine isopeptide (Lys-Gly) (interchain with G-Cter in ubiquitin); alternate. 2 positions are modified to phosphotyrosine: Tyr-534 and Tyr-562. Lys-627 participates in a covalent cross-link: Glycyl lysine isopeptide (Lys-Gly) (interchain with G-Cter in ubiquitin). A Glycyl lysine isopeptide (Lys-Gly) (interchain with G-Cter in ubiquitin); alternate cross-link involves residue Lys-633. Lys-633 is modified (N6-acetyllysine; alternate). Lys-636 participates in a covalent cross-link: Glycyl lysine isopeptide (Lys-Gly) (interchain with G-Cter in ubiquitin).

Belongs to the AAA ATPase family. RarA/MGS1/WRNIP1 subfamily. In terms of assembly, forms homooligomers, possibly octamers. Directly interacts with POLD1, POLD2 and POLD4. Interacts with the N-terminal domain of WRN. Interacts (via UBZ4-type zinc finger) with monoubiquitin and polyubiquitin. Interacts with TRIM14 and PPP6C; these interactions positively regulate the RIGI signaling pathway. Sumoylated with SUMO1 and SUMO2/3. Ubiquitously expressed.

It is found in the nucleus. It localises to the cytoplasm. It carries out the reaction ATP + H2O = ADP + phosphate + H(+). Its function is as follows. Functions as a modulator of initiation or reinitiation events during DNA polymerase delta-mediated DNA synthesis. In the presence of ATP, stimulation of DNA polymerase delta-mediated DNA synthesis is decreased. Also plays a role in the innate immune defense against viruses. Stabilizes the RIGI dsRNA interaction and promotes RIGI 'Lys-63'-linked polyubiquitination. In turn, RIGI transmits the signal through mitochondrial MAVS. This chain is ATPase WRNIP1, found in Homo sapiens (Human).